The following is a 197-amino-acid chain: Methylamine utilization protein MauD (197 aa).

Residues F3 to L23 traverse the membrane as a helical segment. The 133-residue stretch at P48–T180 folds into the Thioredoxin domain.

It localises to the membrane. It participates in one-carbon metabolism; methylamine degradation. Its function is as follows. May be specifically involved in the processing, transport, and/or maturation of the MADH beta-subunit. In Paracoccus versutus (Thiobacillus versutus), this protein is Methylamine utilization protein MauD (mauD).